The sequence spans 447 residues: Serine/threonine-protein phosphatase 2A 55 kDa regulatory subunit B delta isoform (447 aa).

WD repeat units lie at residues 26–65, 91–132, 175–213, 224–264, 283–321, 338–379, and 414–447; these read AEAD…KSRP, EIEE…KRVE, AHTY…RSFN, ELTE…LCDR, EIIS…RPVE, ENDC…DITL, and DFNK…DKVN.

This sequence belongs to the phosphatase 2A regulatory subunit B family. PP2A consists of a common heterodimeric core enzyme, composed of a 36 kDa catalytic subunit (subunit C) and a 65 kDa constant regulatory subunit (PR65 or subunit A), that associates with a variety of regulatory subunits. Proteins that associate with the core dimer include three families of regulatory subunits B (the R2/B/PR55/B55, R3/B''/PR72/PR130/PR59 and R5/B'/B56 families), the 48 kDa variable regulatory subunit, viral proteins, and cell signaling molecules. Interacts with ensa (when phosphorylated at 'Ser-67') and arpp19 (when phosphorylated at 'Ser-67'), leading to inhibit PP2A activity.

The protein resides in the cytoplasm. Substrate-recognition subunit of protein phosphatase 2A (PP2A) that plays a key role in cell cycle by controlling mitosis entry and exit. The activity of PP2A complexes containing ppp2r2d (PR55-delta) fluctuate during the cell cycle: the activity is high in interphase and low in mitosis. During mitosis, activity of PP2A is inhibited via interaction with phosphorylated ensa and arpp19 inhibitors. PP2A complexes containing ppp2r2d (PR55-delta) also regulate the activity of TGF-beta/Activin/Nodal signaling by restricting receptor activity. Within the PP2A complexes, the B regulatory subunits modulate substrate selectivity and catalytic activity, and may also direct the localization of the catalytic enzyme to a particular subcellular compartment. The chain is Serine/threonine-protein phosphatase 2A 55 kDa regulatory subunit B delta isoform (ppp2r2d) from Xenopus laevis (African clawed frog).